Reading from the N-terminus, the 690-residue chain is F-box/LRR-repeat protein 5 (690 aa).

The segment at 1–159 (MAPFPDEVDV…IKKKVIAQHC (159 aa)) is hemerythrin-like. Residues histidine 15, histidine 57, glutamate 58, glutamate 61, histidine 80, histidine 126, and glutamate 130 each coordinate Fe(3+). Residues 202–248 (STGITHLPPEVMLSIFSYLNPQELCRCSQVSTKWSQLAKTGSLWKHL) enclose the F-box domain. LRR repeat units lie at residues 340–364 (SSAV…LDLT), 365–392 (QTDI…DLSG), 393–418 (CEKI…QSGF), 478–507 (VWML…CVME), 575–606 (TTLP…SLSG), 607–634 (CYQI…NLSG), and 635–660 (CLTV…YFYY). Residues cysteine 661, cysteine 675, cysteine 685, and cysteine 686 each coordinate [2Fe-2S] cluster.

In terms of assembly, part of a SCF (SKP1-cullin-F-box) protein ligase complex. Interacts with ACO1/IRP1, IREB2/IRP2; the interaction depends on the [2Fe-2S] cluster. Interacts with DCTN1/p150-glued. [2Fe-2S] cluster is required as a cofactor. Polybiquitinated upon iron and oxygen depletion, leading to its degradation by the proteasome. Ubiquitination is regulated by the hemerythrin-like region that acts as an oxygen and iron sensor. Undergoes constitutive ubiquitin-dependent degradation at the steady state by HERC2. As to expression, ubiquitously expressed. Highly expressed in early embryogenesis with expression decreasing as the embryo progresses through development (E11 and E15).

Its subcellular location is the cytoplasm. It is found in the perinuclear region. The protein localises to the nucleus. It functions in the pathway protein modification; protein ubiquitination. Its activity is regulated as follows. An iron-sulfur cluster promotes IRP2 polyubiquitination and degradation in response to both iron and oxygen concentrations. Its function is as follows. Component of some SCF (SKP1-cullin-F-box) protein ligase complex that plays a central role in iron homeostasis by promoting the ubiquitination and subsequent degradation of IREB2/IRP2. The C-terminal domain of FBXL5 contains a redox-sensitive [2Fe-2S] cluster that, upon oxidation, promotes binding to IRP2 to effect its oxygen-dependent degradation. Under iron deficiency conditions, the N-terminal hemerythrin-like (Hr) region, which contains a diiron metal center, cannot bind iron and undergoes conformational changes that destabilize the FBXL5 protein and cause its ubiquitination and degradation. When intracellular iron levels start rising, the Hr region is stabilized. Additional increases in iron levels facilitate the assembly and incorporation of a redox active [2Fe-2S] cluster in the C-terminal domain. Only when oxygen level is high enough to maintain the cluster in its oxidized state can FBXL5 recruit IRP2 as a substrate for polyubiquination and degradation. Promotes ubiquitination and subsequent degradation of the dynactin complex component DCTN1. Within the nucleus, promotes the ubiquitination of SNAI1; preventing its interaction with DNA and promoting its degradation. Negatively regulates DNA damage response by mediating the ubiquitin-proteasome degradation of the DNA repair protein NABP2. The sequence is that of F-box/LRR-repeat protein 5 (Fbxl5) from Mus musculus (Mouse).